Reading from the N-terminus, the 157-residue chain is Cell cycle regulator of non-homologous end joining (157 aa).

Methionine 1 is modified (N-acetylmethionine). A KBM motif is present at residues 1-21 (METLQSETKTRVLPSWLTAQV). Positions 77-147 (KACEQPALAG…SPEEEEEEDV (71 aa)) are disordered. A compositionally biased stretch (low complexity) spans 98-107 (VSPHTSSGSS). A compositionally biased stretch (polar residues) spans 123–136 (SPSQRPGGSSSACS). Residues 147-157 (VLKYVREIFFS) carry the XLM motif.

As to quaternary structure, interacts (via KBM motif) with XRCC5/Ku80 and XRCC6/Ku70 heterodimer. Interacts (via XLF motif) with TRIM28/KAP1, ATM, MRE11, NBN and RAD50. Interacts with splicing factor SF3B1. Interacts with ERCC6L2; this interaction is DNA independent. In terms of assembly, does not interact with XRCC5/Ku80 and XRCC6/Ku70 heterodimer. Interacts (via KBM motif) with XRCC5/Ku80 and XRCC6/Ku70 heterodimer.

It is found in the cytoplasm. It localises to the nucleus. Its subcellular location is the chromosome. Its function is as follows. Cell-cycle-specific regulator of classical non-homologous end joining (NHEJ) of DNA double-strand break (DSB) repair, which can act both as an activator or inhibitor of NHEJ, depending on the cell cycle phase. Acts as a regulator of DNA repair pathway choice by specifically inhibiting classical NHEJ during the S and G2 phases, thereby promoting error-free repair by homologous recombination during cell cycle phases when sister chromatids are present. Preferentially protects single-stranded overhangs at break sites by inhibiting classical NHEJ, thereby creating a local environment that favors homologous recombination. Acts via interaction with XRCC5/Ku80 and XRCC6/Ku70. In contrast, acts as an activator of NHEJ during G1 phase of the cell cycle: promotes classical NHEJ in G1 phase cells via multivalent interactions that increase the affinity of DNA damage response proteins for DSB-associated chromatin. Also involved in immunoglobulin V(D)J recombination. May also act as an indirect regulator of proteasome. The chain is Cell cycle regulator of non-homologous end joining from Homo sapiens (Human).